A 471-amino-acid chain; its full sequence is UDP-glycosyltransferase CGT (471 aa).

Catalysis depends on His24, which acts as the Proton acceptor. Position 24 (His24) interacts with an anthocyanidin. Asp120 acts as the Charge relay in catalysis. Residue Thr143 participates in UDP-alpha-D-glucose binding. Residues 280–281 are UDP; the sequence is SR. UDP-alpha-D-glucose contacts are provided by Val343, Gln345, His360, Trp363, Asn364, Ser365, and Glu368. Gly383 provides a ligand contact to an anthocyanidin. UDP-alpha-D-glucose is bound by residues Asp384 and Gln385.

This sequence belongs to the UDP-glycosyltransferase family.

The enzyme catalyses a 3'-hydro-2'-hydroxy-beta-oxodihydrochalcone + UDP-alpha-D-glucose = a 3'-(beta-D-glucopyranosyl)-2'-hydroxy-beta-oxodihydrochalcone + UDP + H(+). In terms of biological role, UDP-glucose-dependent glucosyltransferase catalyzing the c-glucosylation of 2-hydroxyflavanones. Acts preferentially on the dibenzoylmethane tautomers formed in equilibrium with 2-hydroxyflavanones. No activity with naringenin or naringenin chalcone. This is UDP-glycosyltransferase CGT from Oryza sativa subsp. indica (Rice).